A 126-amino-acid polypeptide reads, in one-letter code: uncharacterized protein (126 aa).

The 99-residue stretch at 20–118 (CPSREVLKHV…WIELNLPEVL (99 aa)) folds into the HTH hxlR-type domain.

This is an uncharacterized protein from Escherichia coli (strain K12).